A 26-amino-acid polypeptide reads, in one-letter code: Thioredoxin H-type (26 aa).

It belongs to the thioredoxin family. Plant H-type subfamily.

The protein localises to the cytoplasm. Its function is as follows. Participates in various redox reactions through the reversible oxidation of the active center dithiol to a disulfide. The H form is known to activate a number of cytosolic enzymes. The polypeptide is Thioredoxin H-type (Populus euphratica (Euphrates poplar)).